Reading from the N-terminus, the 305-residue chain is D-alanine--D-alanine ligase (305 aa).

An ATP-grasp domain is found at 107–299 (KVIFASAGLK…FGELVLRILQ (193 aa)). ATP is bound at residue 134–185 (PLPVVVKPSREGSSVGVGIVRDPSRMQAALDEAFRYDSEILIEGFIDGREVQ). Positions 253, 266, and 268 each coordinate Mg(2+).

It belongs to the D-alanine--D-alanine ligase family. Requires Mg(2+) as cofactor. The cofactor is Mn(2+).

Its subcellular location is the cytoplasm. It catalyses the reaction 2 D-alanine + ATP = D-alanyl-D-alanine + ADP + phosphate + H(+). The protein operates within cell wall biogenesis; peptidoglycan biosynthesis. Cell wall formation. This is D-alanine--D-alanine ligase from Citrifermentans bemidjiense (strain ATCC BAA-1014 / DSM 16622 / JCM 12645 / Bem) (Geobacter bemidjiensis).